The following is a 174-amino-acid chain: Crossover junction endodeoxyribonuclease RuvC (174 aa).

Residues aspartate 8, glutamate 67, and aspartate 139 contribute to the active site. Mg(2+)-binding residues include aspartate 8, glutamate 67, and aspartate 139.

Belongs to the RuvC family. In terms of assembly, homodimer which binds Holliday junction (HJ) DNA. The HJ becomes 2-fold symmetrical on binding to RuvC with unstacked arms; it has a different conformation from HJ DNA in complex with RuvA. In the full resolvosome a probable DNA-RuvA(4)-RuvB(12)-RuvC(2) complex forms which resolves the HJ. The cofactor is Mg(2+).

The protein localises to the cytoplasm. It catalyses the reaction Endonucleolytic cleavage at a junction such as a reciprocal single-stranded crossover between two homologous DNA duplexes (Holliday junction).. Functionally, the RuvA-RuvB-RuvC complex processes Holliday junction (HJ) DNA during genetic recombination and DNA repair. Endonuclease that resolves HJ intermediates. Cleaves cruciform DNA by making single-stranded nicks across the HJ at symmetrical positions within the homologous arms, yielding a 5'-phosphate and a 3'-hydroxyl group; requires a central core of homology in the junction. The consensus cleavage sequence is 5'-(A/T)TT(C/G)-3'. Cleavage occurs on the 3'-side of the TT dinucleotide at the point of strand exchange. HJ branch migration catalyzed by RuvA-RuvB allows RuvC to scan DNA until it finds its consensus sequence, where it cleaves and resolves the cruciform DNA. The chain is Crossover junction endodeoxyribonuclease RuvC from Pseudomonas putida (strain ATCC 47054 / DSM 6125 / CFBP 8728 / NCIMB 11950 / KT2440).